A 214-amino-acid polypeptide reads, in one-letter code: Putative germin-like protein 9-2 (214 aa).

Positions 1 to 25 (MALSYYSLLLLLLAVWAPALTLVMA) are cleaved as a signal peptide. Residues N44 and N60 are each glycosylated (N-linked (GlcNAc...) asparagine). The Cupin type-1 domain maps to 56 to 202 (RKVFNTSSAP…SFKTDVPTIL (147 aa)). Residues H104, H106, E111, and H150 each contribute to the Mn(2+) site.

This sequence belongs to the germin family. In terms of assembly, oligomer (believed to be a pentamer but probably hexamer).

Its subcellular location is the secreted. The protein localises to the extracellular space. The protein resides in the apoplast. Its function is as follows. May play a role in plant defense. Probably has no oxalate oxidase activity even if the active site is conserved. The polypeptide is Putative germin-like protein 9-2 (Oryza sativa subsp. japonica (Rice)).